The chain runs to 358 residues: MNTFGHRFRFTTFGESHGKALGCIVDGVPAGIKIDEKFIQSEMDRRKPGQNKFATQRKEGDVVEILSGVFEGMTTGTSISMIIFNENQKSGDYSNIKDLFRPGHADFTYFNKYGIRDYRGGGRSSARETAARVAAGAIAKLLLKELNIDIRSGICEINGIQASNFDFENVKDSEIYALDKSVEEEQKNAILEARNSHNSVGGVALVNVKNCPIGLGEPLYFKLDSQIANAMMSINAVKAVEIGDGILASKVKGYENNDQIRKAGFKTNHTGGILGGISNGDEINVKVYFKATPSIFIEQETIDIYNNEVNCNLKGRHDPCVAVRGSVVAESMMALVLADMVLLNLSSKIENIKKVYEK.

Arginine 46 provides a ligand contact to NADP(+). FMN contacts are provided by residues arginine 123 to serine 125, asparagine 235 to alanine 236, glycine 275, lysine 290 to serine 294, and arginine 316.

The protein belongs to the chorismate synthase family. Homotetramer. FMNH2 is required as a cofactor.

The catalysed reaction is 5-O-(1-carboxyvinyl)-3-phosphoshikimate = chorismate + phosphate. It functions in the pathway metabolic intermediate biosynthesis; chorismate biosynthesis; chorismate from D-erythrose 4-phosphate and phosphoenolpyruvate: step 7/7. Functionally, catalyzes the anti-1,4-elimination of the C-3 phosphate and the C-6 proR hydrogen from 5-enolpyruvylshikimate-3-phosphate (EPSP) to yield chorismate, which is the branch point compound that serves as the starting substrate for the three terminal pathways of aromatic amino acid biosynthesis. This reaction introduces a second double bond into the aromatic ring system. The chain is Chorismate synthase from Aliarcobacter butzleri (strain RM4018) (Arcobacter butzleri).